A 467-amino-acid chain; its full sequence is Asparagine--tRNA ligase (467 aa).

Belongs to the class-II aminoacyl-tRNA synthetase family. In terms of assembly, homodimer.

Its subcellular location is the cytoplasm. It carries out the reaction tRNA(Asn) + L-asparagine + ATP = L-asparaginyl-tRNA(Asn) + AMP + diphosphate + H(+). The sequence is that of Asparagine--tRNA ligase from Haemophilus ducreyi (strain 35000HP / ATCC 700724).